A 208-amino-acid polypeptide reads, in one-letter code: Mediator of RNA polymerase II transcription subunit 21 (208 aa).

The interval 52–122 (TKNSTAPPAP…PDSPRTFASR (71 aa)) is disordered. Residues 63–83 (GAPAGSQASPQQQSAQIPGQQ) show a composition bias toward low complexity. Residues 84 to 104 (QQGGGDAGQTPGAGGGTGGAG) show a composition bias toward gly residues. Residues 146–195 (GIDSSEAEQERRIKELEKELRSAEEDREQRVRELRKLRKKLENVLGAVEV) adopt a coiled-coil conformation.

Belongs to the Mediator complex subunit 21 family. In terms of assembly, component of the Mediator complex.

Its subcellular location is the nucleus. In terms of biological role, component of the Mediator complex, a coactivator involved in the regulated transcription of nearly all RNA polymerase II-dependent genes. Mediator functions as a bridge to convey information from gene-specific regulatory proteins to the basal RNA polymerase II transcription machinery. Mediator is recruited to promoters by direct interactions with regulatory proteins and serves as a scaffold for the assembly of a functional preinitiation complex with RNA polymerase II and the general transcription factors. The polypeptide is Mediator of RNA polymerase II transcription subunit 21 (srb7) (Aspergillus oryzae (strain ATCC 42149 / RIB 40) (Yellow koji mold)).